A 2214-amino-acid polypeptide reads, in one-letter code: Multifunctional protein URA2 (2214 aa).

Ala2 carries the post-translational modification N-acetylalanine. Residues 2 to 400 form a GATase (Glutamine amidotransferase) region; sequence ATIAPTAPIT…PGPRDTEFLF (399 aa). Residues Ser64, Gly273, and Gly275 each contribute to the L-glutamine site. A Glutamine amidotransferase type-1 domain is found at 228–413; sequence RILAIDVGMK…IQAVKEFKYT (186 aa). The active-site Nucleophile; for GATase activity is the Cys302. The L-glutamine site is built by Leu303, Gln306, Asn344, Gly346, and Phe347. Active-site for GATase activity residues include His386 and Glu388. The tract at residues 401 to 440 is linker; sequence DVFIQAVKEFKYTQVLKPIAFPGGLLEDNVKAHPRIEAKK. Residues 440 to 980 are CPSase A; the sequence is KVLVLGSGGL…DSHDLSFDDH (541 aa). Residues 440-1482 form a CPSase (Carbamoyl phosphate synthase) region; that stretch reads KVLVLGSGGL…TNVKCAKLLI (1043 aa). Residues Arg558, Arg598, Gly604, Gly605, Lys635, Met637, Glu642, Gly668, Ile669, His670, Gln711, and Glu725 each coordinate ATP. ATP-grasp domains follow at residues 562-754 and 1099-1290; these read SNAI…KLGL and SRML…KAIM. Residues Gln711, Glu725, and Asn727 each coordinate Mg(2+). Mn(2+) is bound by residues Gln711, Glu725, and Asn727. The segment at 981–1482 is CPSase B; that stretch reads GVMVLGSGVY…TNVKCAKLLI (502 aa). The ATP site is built by Arg1135, Lys1174, Ile1176, Glu1181, Gly1206, Val1207, His1208, Ser1209, Gln1249, and Glu1261. Mg(2+) is bound by residues Gln1249, Glu1261, and Asn1263. Residues Gln1249, Glu1261, and Asn1263 each contribute to the Mn(2+) site. Residues 1356–1508 form the MGS-like domain; that stretch reads FKLPKKNILL…QTSHRTITLP (153 aa). Positions 1483–1492 are linker; that stretch reads EAISRNITLD. The defective DHOase domain stretch occupies residues 1493-1821; that stretch reads VSERDAQTSH…YNGETLVLSG (329 aa). The interval 1822-1909 is linker; sequence ELVSPGAKGK…NLIRSNNPFR (88 aa). Lys1853 is covalently cross-linked (Glycyl lysine isopeptide (Lys-Gly) (interchain with G-Cter in ubiquitin)). Residue Ser1857 is modified to Phosphoserine; by PKA. The ATCase (Aspartate transcarbamylase) stretch occupies residues 1910–2214; sequence GRHILSIKQF…LLAMVMGVDM (305 aa). Residues Arg1962 and Thr1963 each coordinate carbamoyl phosphate. Lys1990 lines the L-aspartate pocket. Carbamoyl phosphate-binding residues include Arg2011, His2039, and Gln2042. 2 residues coordinate L-aspartate: Arg2072 and Arg2134. Carbamoyl phosphate contacts are provided by Leu2173 and Pro2174.

The protein in the N-terminal section; belongs to the CarA family. It in the 2nd section; belongs to the CarB family. This sequence in the 3rd section; belongs to the metallo-dependent hydrolases superfamily. DHOase family. CAD subfamily. In the C-terminal section; belongs to the aspartate/ornithine carbamoyltransferase superfamily. ATCase family. The cofactor is Mg(2+). It depends on Mn(2+) as a cofactor.

Its subcellular location is the cytoplasm. The catalysed reaction is hydrogencarbonate + L-glutamine + 2 ATP + H2O = carbamoyl phosphate + L-glutamate + 2 ADP + phosphate + 2 H(+). It carries out the reaction L-glutamine + H2O = L-glutamate + NH4(+). The enzyme catalyses hydrogencarbonate + NH4(+) + 2 ATP = carbamoyl phosphate + 2 ADP + phosphate + 2 H(+). It catalyses the reaction carbamoyl phosphate + L-aspartate = N-carbamoyl-L-aspartate + phosphate + H(+). Its pathway is pyrimidine metabolism; UMP biosynthesis via de novo pathway; (S)-dihydroorotate from bicarbonate: step 1/3. The protein operates within pyrimidine metabolism; UMP biosynthesis via de novo pathway; (S)-dihydroorotate from bicarbonate: step 2/3. Both CPSase and ATCase activities are feedback inhibited by the end product UTP. In terms of biological role, multifunctional protein that encodes the first 2 enzymatic activities of the de novo pyrimidine pathway: carbamoylphosphate synthetase (CPSase; EC 6.3.5.5) and aspartate transcarbamylase (ATCase; EC 2.1.3.2). The CPSase-function is accomplished in 2 steps, by a glutamine-dependent amidotransferase activity (GATase) that binds and cleaves glutamine to produce ammonia, followed by an ammonium-dependent carbamoyl phosphate synthetase, which reacts with the ammonia, hydrogencarbonate and ATP to form carbamoyl phosphate. The endogenously produced carbamoyl phosphate is sequestered and channeled to the ATCase active site. ATCase then catalyzes the formation of carbamoyl-L-aspartate from L-aspartate and carbamoyl phosphate. The polypeptide is Multifunctional protein URA2 (URA2) (Saccharomyces cerevisiae (strain ATCC 204508 / S288c) (Baker's yeast)).